Consider the following 520-residue polypeptide: Legumin A2 (520 aa).

An N-terminal signal peptide occupies residues M1 to A22. 2 disulfides stabilise this stretch: C32/C65 and C108/C342. In terms of domain architecture, Cupin type-1 1 spans L37–D233. The segment at V250–E339 is disordered. Positions L348–R497 constitute a Cupin type-1 2 domain.

The protein belongs to the 11S seed storage protein (globulins) family. As to quaternary structure, hexamer; each subunit is composed of an acidic and a basic chain derived from a single precursor and linked by a disulfide bond.

Functionally, this protein found in the seeds of many leguminous and non-leguminous plants is the source of sulfur-containing amino acids in seed meals. The polypeptide is Legumin A2 (LEGA2) (Pisum sativum (Garden pea)).